The primary structure comprises 734 residues: Protein arginine N-methyltransferase 5 (734 aa).

A compositionally biased stretch (polar residues) spans 1–16 (MSNRTYADNLFPQQVA). A disordered region spans residues 1-39 (MSNRTYADNLFPQQVAEQHEEQMSSGSSPKSNSPSRSIS). Over residues 24–39 (SSGSSPKSNSPSRSIS) the composition is skewed to low complexity. Positions 42 to 329 (EAANSRIHIG…EYSQALRHAV (288 aa)) are TIM barrel. The SAM-dependent MTase PRMT-type domain occupies 360 to 706 (LQAPLQPLSE…VDNTGVWYEW (347 aa)). Residue Y376 coordinates S-adenosyl-L-methionine. Residue F379 coordinates a protein. S-adenosyl-L-methionine contacts are provided by residues 385–386 (KY), E450, and 477–478 (DM). A protein contacts are provided by E499 and E508. Catalysis depends on proton donor/acceptor residues E499 and E508. Positions 529 to 734 (PQKYTSYVKP…PNGESYYMRM (206 aa)) are beta barrel. The dimerization stretch occupies residues 541 to 589 (STHIHQTIKAQSIPYLSRAIPSHGRGEPELDEDEMWIQKYPQGHVRNNM).

This sequence belongs to the class I-like SAM-binding methyltransferase superfamily. Protein arginine N-methyltransferase family. As to quaternary structure, homodimer. Interacts with cep-1 (via C-terminus domain); does not methylate cep-1. Interacts with cbp-1 (via N-terminus domain and HAT domain); the interaction results in methylation of cbp-1. Component of a complex that contains cep-1 and cbp-1. May interact with pid-2, pid-4 and pid-5.

Its subcellular location is the nucleus. It catalyses the reaction L-arginyl-[protein] + 2 S-adenosyl-L-methionine = N(omega),N(omega)'-dimethyl-L-arginyl-[protein] + 2 S-adenosyl-L-homocysteine + 2 H(+). Functionally, catalyzes the symmetrical dimethylation of arginine residues in targets such as small nuclear ribonucleoproteins, histone H2A/H4 and cbp-1. Dimethylation occurs in a distributive manner where the protein is released after the addition of the first methyl group prior to rebinding for the addition of the second methyl group. Plays a role in the negative regulation of DNA damage-induced apoptosis. By methylating cbp-1, may prevent apoptosis by repressing the capacity of cbp-1 to enhance cep-1 dependent transcription activation of the programmed cell death activator egl-1. Plays a role in heat and oxidative stress resistance. This Caenorhabditis elegans protein is Protein arginine N-methyltransferase 5.